The chain runs to 373 residues: Ferroptosis suppressor protein 1 (373 aa).

G2 carries N-myristoyl glycine lipidation. The chain crosses the membrane as a helical span at residues 7–27 (VDTGAVHVVIVGGGFGGIAAA). 6-hydroxy-FAD is bound by residues 18 to 22 (GGGFG), R54, and V82. K168 carries the N6-acetyllysine modification. Residue D285 participates in 6-hydroxy-FAD binding.

This sequence belongs to the FAD-dependent oxidoreductase family. In terms of assembly, interacts with importin subunits KPNA2 and IPO5; this interaction likely mediates the translocation into the nucleus upon oxidative stress. 6-hydroxy-FAD is required as a cofactor. Post-translationally, N-myristoylation at Gly-2 mediates the recruitment to lipid droplets and plasma membrane. In terms of processing, acetylation at Lys-168 prevents AIFM2 ubiquitination and degradation, thereby inhibiting ferroptosis. KAT2B mediates acetylation at Lys-168, while HDAC3 removes it. Ubiquitinated. AIFM2 undergoes 'Lys-29'-ubiquitination and proteasomal degradation, which is inhibited by acetylation at Lys-168. In terms of tissue distribution, detected in most normal tissues as two transcripts of 1.8 and 4.0 kb in length, respectively. Highly expressed in liver, testis, and kidney, and expressed at lower levels in pancreas, spleen, brain and lung. Expressed in heart (at protein level).

It localises to the lipid droplet. Its subcellular location is the cell membrane. The protein localises to the cytoplasm. It is found in the mitochondrion membrane. The protein resides in the nucleus. It catalyses the reaction ubiquinone-10 + NADH + H(+) = ubiquinol-10 + NAD(+). The enzyme catalyses phylloquinone + NADH + H(+) = phylloquinol + NAD(+). It carries out the reaction menaquinone-4 + NADH + H(+) = menaquinol-4 + NAD(+). The catalysed reaction is menadione + NADH + H(+) = menadiol + NAD(+). Its activity is regulated as follows. The modification by 4-hydroxy-2-nonenal (HNE) adduction in mitochondria results in loss of the oxidoreductase activity and activation of a novel function in mitochondrial oxidative stress signaling. Functionally, a NAD(P)H-dependent oxidoreductase that acts as a key inhibitor of ferroptosis. At the plasma membrane, catalyzes reduction of coenzyme Q/ubiquinone-10 to ubiquinol-10, a lipophilic radical-trapping antioxidant that prevents lipid oxidative damage and consequently ferroptosis. Acts in parallel to GPX4 to suppress phospholipid peroxidation and ferroptosis. This anti-ferroptotic function is independent of cellular glutathione levels. Also acts as a potent radical-trapping antioxidant by mediating warfarin-resistant vitamin K reduction in the canonical vitamin K cycle: catalyzes NAD(P)H-dependent reduction of vitamin K (phylloquinone, menaquinone-4 and menadione) to hydroquinone forms. Hydroquinones act as potent radical-trapping antioxidants inhibitor of phospholipid peroxidation and ferroptosis. May play a role in mitochondrial stress signaling. Upon oxidative stress, associates with the lipid peroxidation end product 4-hydroxy-2-nonenal (HNE) forming a lipid adduct devoid of oxidoreductase activity, which then translocates from mitochondria into the nucleus triggering DNA damage and cell death. This Mus musculus (Mouse) protein is Ferroptosis suppressor protein 1.